We begin with the raw amino-acid sequence, 141 residues long: Lutropin subunit beta (141 aa).

The signal sequence occupies residues 1-22; the sequence is MERYQELTVLLLLLLLEGGSWG. 6 cysteine pairs are disulfide-bonded: Cys30–Cys78, Cys44–Cys93, Cys47–Cys131, Cys55–Cys109, Cys59–Cys111, and Cys114–Cys121. A glycan (N-linked (GlcNAc...) asparagine) is linked at Asn34.

This sequence belongs to the glycoprotein hormones subunit beta family. Heterodimer of a common alpha chain and a unique beta chain which confers biological specificity to thyrotropin, lutropin, follitropin and gonadotropin.

It is found in the secreted. Its function is as follows. Promotes spermatogenesis and ovulation by stimulating the testes and ovaries to synthesize steroids. This chain is Lutropin subunit beta (LHB), found in Trichosurus vulpecula (Brush-tailed possum).